The chain runs to 366 residues: MPKHRKQSKIKIYRITSYKKDKRSELDSDKFELEQQDKHDIQDKQDKQDEQNKQDKQVQSENVTIVPTDSHSLDVWDEISLKEIQAGEHTSLFEEKSNYQNINLVQVNDVRLYLDKQLQFSSVDEQIYHEALVHPIMAKVIDPKRVLILGGGDGLALREVLKYETVLHVDLVDLDEAMINMARNVPEIVSLNKNAFFDNRVNVHVCDAKEFLNSPSSLYDVIIIDFPDPATELLSTLYTSELFARIATFLTEDGAFVCQSNSPADAPLVYWSIGNTIEHAGLTVKSYHTIVPSFGTDWGFHLATNSAHVLDQIEQLYVVPTPRTLPALLFPLFQFKEEHLEQRNLALLNSESNLILHQCYKQEMKF.

Residues 20 to 58 (KDKRSELDSDKFELEQQDKHDIQDKQDKQDEQNKQDKQV) show a composition bias toward basic and acidic residues. The segment at 20–61 (KDKRSELDSDKFELEQQDKHDIQDKQDKQDEQNKQDKQVQSE) is disordered. Residues 74 to 305 (DVWDEISLKE…TDWGFHLATN (232 aa)) enclose the PABS domain. Gln-100 contributes to the S-methyl-5'-thioadenosine binding site. Positions 129 and 153 each coordinate spermidine. S-methyl-5'-thioadenosine-binding positions include Asp-173 and 207-208 (DA). Catalysis depends on Asp-225, which acts as the Proton acceptor.

This sequence belongs to the spermidine/spermine synthase family. In terms of assembly, homodimer or homotetramer.

It localises to the cytoplasm. The catalysed reaction is S-adenosyl 3-(methylsulfanyl)propylamine + putrescine = S-methyl-5'-thioadenosine + spermidine + H(+). It participates in amine and polyamine biosynthesis; spermidine biosynthesis; spermidine from putrescine: step 1/1. Catalyzes the irreversible transfer of a propylamine group from the amino donor S-adenosylmethioninamine (decarboxy-AdoMet) to putrescine (1,4-diaminobutane) to yield spermidine. In Bacillus cereus (strain ATCC 14579 / DSM 31 / CCUG 7414 / JCM 2152 / NBRC 15305 / NCIMB 9373 / NCTC 2599 / NRRL B-3711), this protein is Polyamine aminopropyltransferase 2.